The following is a 109-amino-acid chain: MRVNAQHKNARISAQKARLVADLIRGKDVAQALNILAFSPKKGAELIKKVLESAIANAEHNNGADIDELKVVTIFVDKGPSLKRFQARAKGRGNRIEKQTCHINVTVGN.

The protein belongs to the universal ribosomal protein uL22 family. As to quaternary structure, part of the 50S ribosomal subunit.

Its function is as follows. This protein binds specifically to 23S rRNA; its binding is stimulated by other ribosomal proteins, e.g. L4, L17, and L20. It is important during the early stages of 50S assembly. It makes multiple contacts with different domains of the 23S rRNA in the assembled 50S subunit and ribosome. In terms of biological role, the globular domain of the protein is located near the polypeptide exit tunnel on the outside of the subunit, while an extended beta-hairpin is found that lines the wall of the exit tunnel in the center of the 70S ribosome. The chain is Large ribosomal subunit protein uL22 from Neisseria gonorrhoeae (strain ATCC 700825 / FA 1090).